Reading from the N-terminus, the 220-residue chain is UPF0319 protein YccT (220 aa).

An N-terminal signal peptide occupies residues 1–20 (MKTGALATFLALCLPVTVFA).

The protein belongs to the UPF0319 family.

The sequence is that of UPF0319 protein YccT from Salmonella agona (strain SL483).